A 426-amino-acid polypeptide reads, in one-letter code: Glutamate-1-semialdehyde 2,1-aminomutase (426 aa).

An N6-(pyridoxal phosphate)lysine modification is found at Lys267.

It belongs to the class-III pyridoxal-phosphate-dependent aminotransferase family. HemL subfamily. Homodimer. Pyridoxal 5'-phosphate is required as a cofactor.

The protein resides in the cytoplasm. The enzyme catalyses (S)-4-amino-5-oxopentanoate = 5-aminolevulinate. Its pathway is porphyrin-containing compound metabolism; protoporphyrin-IX biosynthesis; 5-aminolevulinate from L-glutamyl-tRNA(Glu): step 2/2. This Bdellovibrio bacteriovorus (strain ATCC 15356 / DSM 50701 / NCIMB 9529 / HD100) protein is Glutamate-1-semialdehyde 2,1-aminomutase.